Here is a 525-residue protein sequence, read N- to C-terminus: GMP synthase [glutamine-hydrolyzing] (525 aa).

Residues 8-207 form the Glutamine amidotransferase type-1 domain; it reads KILILDFGSQ…ALDICGCAAN (200 aa). Catalysis depends on C85, which acts as the Nucleophile. Residues H181 and E183 contribute to the active site. The region spanning 208–400 is the GMPS ATP-PPase domain; that stretch reads WKPSSIIEDA…LGLPYNMLYR (193 aa). 235–241 contacts ATP; it reads SGGVDSS.

Homodimer.

The catalysed reaction is XMP + L-glutamine + ATP + H2O = GMP + L-glutamate + AMP + diphosphate + 2 H(+). Its pathway is purine metabolism; GMP biosynthesis; GMP from XMP (L-Gln route): step 1/1. Catalyzes the synthesis of GMP from XMP. This chain is GMP synthase [glutamine-hydrolyzing], found in Shewanella baltica (strain OS155 / ATCC BAA-1091).